Consider the following 356-residue polypeptide: MSTVTITDLARENVRNLTPYQSARRLGGNGDVWLNANEYPTAVEFKLTQQTLNRYPECQPKAVIENYAQYAGVKPEQVLVSRGADEGIELLIRAFCEPGKDAILYCPPTYGMYSVSAETIGVECRTVPTLENWQLDLQGISDKLDGVKVVYVCSPNNPTGQLINPQDFRTLLELTRGKAIVVADEAYIEFCPQASLAGWLAEYPHLAILRTLSKAFALAGLRCGFTLANEEVINLLMKVIPPYPLSTPVADIAAQALSPQGIVAMSERVAQIITEREYLIAALKEIPCVEQVFDSETNYILARFKASSAVFKSLWDQGIILRDQNKQPSLSGCLRITVGTREESQRVIDALRAEQV.

An N6-(pyridoxal phosphate)lysine modification is found at Lys-214.

Belongs to the class-II pyridoxal-phosphate-dependent aminotransferase family. Histidinol-phosphate aminotransferase subfamily. Homodimer. Pyridoxal 5'-phosphate serves as cofactor.

The enzyme catalyses L-histidinol phosphate + 2-oxoglutarate = 3-(imidazol-4-yl)-2-oxopropyl phosphate + L-glutamate. Its pathway is amino-acid biosynthesis; L-histidine biosynthesis; L-histidine from 5-phospho-alpha-D-ribose 1-diphosphate: step 7/9. This is Histidinol-phosphate aminotransferase from Shigella flexneri serotype 5b (strain 8401).